The primary structure comprises 1158 residues: ATP-dependent helicase/deoxyribonuclease subunit B (1158 aa).

The 275-residue stretch at Met-1–Asn-275 folds into the UvrD-like helicase ATP-binding domain. Gly-8–Ser-15 is an ATP binding site. Residues Asn-269–Val-583 form the UvrD-like helicase C-terminal domain. Positions 784, 1112, 1115, and 1121 each coordinate [4Fe-4S] cluster.

Belongs to the helicase family. AddB/RexB type 1 subfamily. In terms of assembly, heterodimer of AddA and AddB. It depends on Mg(2+) as a cofactor. The cofactor is [4Fe-4S] cluster.

Its function is as follows. The heterodimer acts as both an ATP-dependent DNA helicase and an ATP-dependent, dual-direction single-stranded exonuclease. Recognizes the chi site generating a DNA molecule suitable for the initiation of homologous recombination. The AddB subunit has 5' -&gt; 3' nuclease activity but not helicase activity. The sequence is that of ATP-dependent helicase/deoxyribonuclease subunit B from Staphylococcus aureus (strain MW2).